The following is a 53-amino-acid chain: MSFETWMAALDGYMTETFGLGYQDIADWTYRDAYDDGLTFREAAHRAINHEFL.

This chain is Gene 87 protein (87), found in Mycobacterium phage L5 (Mycobacteriophage L5).